The chain runs to 585 residues: Adenine deaminase (585 aa).

Belongs to the metallo-dependent hydrolases superfamily. Adenine deaminase family. It depends on Mn(2+) as a cofactor.

It catalyses the reaction adenine + H2O + H(+) = hypoxanthine + NH4(+). The polypeptide is Adenine deaminase (Halalkalibacterium halodurans (strain ATCC BAA-125 / DSM 18197 / FERM 7344 / JCM 9153 / C-125) (Bacillus halodurans)).